A 309-amino-acid chain; its full sequence is Olfactory receptor 2AP1 (309 aa).

Residues 1-23 (MKNKTVLTEFILLGLTDVPELQV) lie on the Extracellular side of the membrane. Asn-3 carries N-linked (GlcNAc...) asparagine glycosylation. Residues 24 to 47 (AVFTFLFLAYLLSILGNLTILILT) form a helical membrane-spanning segment. Residues 48–55 (LLDSHLQT) are Cytoplasmic-facing. Residues 56–77 (PMYFFLRNFSFLEISFTNIFIP) traverse the membrane as a helical segment. Over 78-98 (RVLISITTGNKSISFAGCFTQ) the chain is Extracellular. An N-linked (GlcNAc...) asparagine glycan is attached at Asn-87. A disulfide bridge connects residues Cys-95 and Cys-187. A helical transmembrane segment spans residues 99 to 118 (YFFAMFLGATEFYLLAAMSY). Residues 119 to 137 (DRYVAICKPLHYTTIMSSR) lie on the Cytoplasmic side of the membrane. A helical membrane pass occupies residues 138–156 (ICIQLIFCSWLGGLMAIIP). The Extracellular segment spans residues 157 to 193 (TITLMSQQDFCASNRLNHYFCDYEPLLELSCSDTSLI). The chain crosses the membrane as a helical span at residues 194 to 217 (EKVVFLVASVTLVVTLVLVILSYA). Topologically, residues 218–234 (FIIKTILKLPSAQQRTK) are cytoplasmic. The helical transmembrane segment at 235–257 (AFSTCSSHMIVISLSYGSCMFMY) threads the bilayer. Topologically, residues 258-270 (INPSAKEGDTFNK) are extracellular. The chain crosses the membrane as a helical span at residues 271-290 (GVALLITSVAPLLNPFIYTL). Topologically, residues 291-309 (RNQQVKQPFKDMVKKLLNL) are cytoplasmic.

The protein belongs to the G-protein coupled receptor 1 family.

The protein resides in the cell membrane. Odorant receptor. The polypeptide is Olfactory receptor 2AP1 (OR2AP1) (Homo sapiens (Human)).